A 140-amino-acid chain; its full sequence is Nucleoside diphosphate kinase (140 aa).

ATP is bound by residues Lys11, Phe59, Arg87, Thr93, Arg104, and Asn114. His117 acts as the Pros-phosphohistidine intermediate in catalysis.

Belongs to the NDK family. As to quaternary structure, homotetramer. Mg(2+) is required as a cofactor.

It localises to the cytoplasm. It carries out the reaction a 2'-deoxyribonucleoside 5'-diphosphate + ATP = a 2'-deoxyribonucleoside 5'-triphosphate + ADP. It catalyses the reaction a ribonucleoside 5'-diphosphate + ATP = a ribonucleoside 5'-triphosphate + ADP. Functionally, major role in the synthesis of nucleoside triphosphates other than ATP. The ATP gamma phosphate is transferred to the NDP beta phosphate via a ping-pong mechanism, using a phosphorylated active-site intermediate. The protein is Nucleoside diphosphate kinase of Chelativorans sp. (strain BNC1).